Here is a 198-residue protein sequence, read N- to C-terminus: MKIIIATHNPHKTEEIKNFFKGYPVEIYSMADLGIKEDIEETGDTIEENALIKARFLKEKVDGIVIADDTGLFVEHLNGQPGVYSARFAGENATYEDNNKKLLKLLEGVPYEKRKAYFKTVIAVVEREKETLLEGKLEGHILDHPRGKNGFGYDPVFYVDNLGKSLAELTMEEKNKISHRADALMKLKNYILKRLEEK.

Residue 7–12 coordinates substrate; that stretch reads THNPHK. Residues glutamate 40 and aspartate 69 each coordinate Mg(2+). Aspartate 69 serves as the catalytic Proton acceptor. Substrate contacts are provided by residues threonine 70, 151–154, lysine 174, and 179–180; these read FGYD and HR.

It belongs to the HAM1 NTPase family. As to quaternary structure, homodimer. Mg(2+) is required as a cofactor.

It catalyses the reaction XTP + H2O = XMP + diphosphate + H(+). The catalysed reaction is dITP + H2O = dIMP + diphosphate + H(+). The enzyme catalyses ITP + H2O = IMP + diphosphate + H(+). Its function is as follows. Pyrophosphatase that catalyzes the hydrolysis of nucleoside triphosphates to their monophosphate derivatives, with a high preference for the non-canonical purine nucleotides XTP (xanthosine triphosphate), dITP (deoxyinosine triphosphate) and ITP. Seems to function as a house-cleaning enzyme that removes non-canonical purine nucleotides from the nucleotide pool, thus preventing their incorporation into DNA/RNA and avoiding chromosomal lesions. The chain is dITP/XTP pyrophosphatase from Thermoanaerobacter sp. (strain X514).